A 1445-amino-acid chain; its full sequence is Spermatogenesis-associated protein 31E1 (1445 aa).

A helical membrane pass occupies residues 64–84 (WMMDFILTSVCGLVLLFLLLL). Disordered regions lie at residues 90-115 (PPSP…SRSR) and 169-262 (VPAK…PDSS). A compositionally biased stretch (basic and acidic residues) spans 101 to 110 (SREPQRERSG). Over residues 241-260 (VFPPSPQPHGPLASSPPPPD) the composition is skewed to pro residues. The N-linked (GlcNAc...) asparagine glycan is linked to N408. Disordered regions lie at residues 411–430 (TQPQ…TVGN), 460–557 (NPSS…ERTQ), 592–619 (LSQP…PGVV), and 637–761 (QEQS…KEHL). Positions 664 to 681 (PQSQAEDTQQALLPSQPS) are enriched in polar residues. N-linked (GlcNAc...) asparagine glycans are attached at residues N819, N906, and N1160. Disordered stretches follow at residues 894–966 (FLGK…TCSL), 1143–1242 (RLPT…IGDK), 1254–1280 (KGQT…RKGG), and 1378–1445 (SPKA…CLAS). Polar residues-rich tracts occupy residues 906 to 915 (NRTTSKSVPT) and 1148 to 1165 (APLS…TASQ). Residues 1202–1217 (DKGEAHRRPRTGEQGH) show a composition bias toward basic and acidic residues.

It belongs to the SPATA31 family.

It localises to the membrane. Functionally, may play a role in spermatogenesis. This is Spermatogenesis-associated protein 31E1 (SPATA31E1) from Homo sapiens (Human).